The following is a 232-amino-acid chain: Small ribosomal subunit protein uS3 (232 aa).

Residues 39–107 form the KH type-2 domain; sequence IRAFLKKKLY…EVNVNIKEER (69 aa). The disordered stretch occupies residues 212-232; it reads VQPEKTEDDAPKKTRRPRRGK. A compositionally biased stretch (basic and acidic residues) spans 213–223; that stretch reads QPEKTEDDAPK.

The protein belongs to the universal ribosomal protein uS3 family. In terms of assembly, part of the 30S ribosomal subunit. Forms a tight complex with proteins S10 and S14.

Functionally, binds the lower part of the 30S subunit head. Binds mRNA in the 70S ribosome, positioning it for translation. The chain is Small ribosomal subunit protein uS3 from Campylobacter curvus (strain 525.92).